The chain runs to 285 residues: Malonyl-[acyl-carrier protein] O-methyltransferase (285 aa).

Belongs to the methyltransferase superfamily.

It catalyses the reaction malonyl-[ACP] + S-adenosyl-L-methionine = malonyl-[ACP] methyl ester + S-adenosyl-L-homocysteine. It participates in cofactor biosynthesis; biotin biosynthesis. Converts the free carboxyl group of a malonyl-thioester to its methyl ester by transfer of a methyl group from S-adenosyl-L-methionine (SAM). It allows to synthesize pimeloyl-ACP via the fatty acid synthetic pathway. This chain is Malonyl-[acyl-carrier protein] O-methyltransferase, found in Bacillus cytotoxicus (strain DSM 22905 / CIP 110041 / 391-98 / NVH 391-98).